We begin with the raw amino-acid sequence, 422 residues long: Elongation factor 1-alpha (422 aa).

The tr-type G domain maps to 5–221 (KPHMNLAVIG…NNLKVPEKPS (217 aa)). The G1 stretch occupies residues 14–21 (GHIDHGKS). 14–21 (GHIDHGKS) is a binding site for GTP. A Mg(2+)-binding site is contributed by serine 21. The interval 70 to 74 (GITID) is G2. Positions 91 to 94 (DCPG) are G3. GTP-binding positions include 91–95 (DCPGH) and 146–149 (NKMD). Residues 146–149 (NKMD) are G4. Residues 185–187 (SAF) form a G5 region.

The protein belongs to the TRAFAC class translation factor GTPase superfamily. Classic translation factor GTPase family. EF-Tu/EF-1A subfamily.

The protein resides in the cytoplasm. It carries out the reaction GTP + H2O = GDP + phosphate + H(+). Its function is as follows. GTP hydrolase that promotes the GTP-dependent binding of aminoacyl-tRNA to the A-site of ribosomes during protein biosynthesis. The chain is Elongation factor 1-alpha from Methanosarcina barkeri (strain Fusaro / DSM 804).